The following is a 402-amino-acid chain: LIM homeobox transcription factor 1-beta (402 aa).

2 LIM zinc-binding domains span residues 56 to 106 (CEGC…CKQD) and 115 to 168 (CSGC…CKGD). Disordered stretches follow at residues 176-229 (LSSV…LTTQ) and 326-346 (PYGSSDPFQQGLTPPQMPGDH). A DNA-binding region (homeobox) is located at residues 219-278 (PKRPRTILTTQQRRAFKASFEVSSKPCRKVRETLAAETGLSVRVVQVWFQNQRAKMKKLA). Positions 326-338 (PYGSSDPFQQGLT) are enriched in polar residues.

As to quaternary structure, interacts with DHX9. Expressed in most tissues. Highest levels in testis, thyroid, duodenum, skeletal muscle, and pancreatic islets.

The protein localises to the nucleus. Transcription factor involved in the regulation of podocyte-expressed genes. Essential for the specification of dorsal limb fate at both the zeugopodal and autopodal levels. The protein is LIM homeobox transcription factor 1-beta (LMX1B) of Homo sapiens (Human).